The chain runs to 251 residues: Precorrin-4 C(11)-methyltransferase (251 aa).

This sequence belongs to the precorrin methyltransferase family.

It catalyses the reaction precorrin-4 + S-adenosyl-L-methionine = precorrin-5 + S-adenosyl-L-homocysteine. Its pathway is cofactor biosynthesis; adenosylcobalamin biosynthesis; cob(II)yrinate a,c-diamide from precorrin-2 (aerobic route): step 4/10. Catalyzes the methylation of C-11 in precorrin-4 to form precorrin-5. This chain is Precorrin-4 C(11)-methyltransferase (cobM), found in Mycobacterium tuberculosis (strain CDC 1551 / Oshkosh).